An 806-amino-acid polypeptide reads, in one-letter code: Phenylalanine--tRNA ligase beta subunit (806 aa).

The region spanning 39-154 (SAGLKKIVVG…EAIAPGTDVY (116 aa)) is the tRNA-binding domain. In terms of domain architecture, B5 spans 410-485 (PQPKVIQFDS…RLYGYDNLPS (76 aa)). Residues aspartate 463, aspartate 469, glutamate 472, and glutamate 473 each coordinate Mg(2+). One can recognise an FDX-ACB domain in the interval 713 to 806 (PKFPEVTRDI…LVATFQAKVR (94 aa)).

This sequence belongs to the phenylalanyl-tRNA synthetase beta subunit family. Type 1 subfamily. As to quaternary structure, tetramer of two alpha and two beta subunits. It depends on Mg(2+) as a cofactor.

The protein localises to the cytoplasm. It carries out the reaction tRNA(Phe) + L-phenylalanine + ATP = L-phenylalanyl-tRNA(Phe) + AMP + diphosphate + H(+). The protein is Phenylalanine--tRNA ligase beta subunit of Latilactobacillus sakei subsp. sakei (strain 23K) (Lactobacillus sakei subsp. sakei).